The sequence spans 187 residues: MLTTSDFKRGLVIKLDNSPCLILDVHFQSPSARGASTMVKTRYRNLLTGQVLDKTFRSGDKVEEADFERHKGQYLYADGDRGVFMDMETYEQFEMDAESFQVIQPYLLDGTEVVLGLFQERLVSVDPPQVVELTITDTPPVIKNATATAQTKEATLETGLTLQVPPYLEVGEKIKVDTRDCRFISRA.

The protein belongs to the elongation factor P family.

The protein resides in the cytoplasm. The protein operates within protein biosynthesis; polypeptide chain elongation. Its function is as follows. Involved in peptide bond synthesis. Stimulates efficient translation and peptide-bond synthesis on native or reconstituted 70S ribosomes in vitro. Probably functions indirectly by altering the affinity of the ribosome for aminoacyl-tRNA, thus increasing their reactivity as acceptors for peptidyl transferase. The sequence is that of Elongation factor P 1 from Geobacter sulfurreducens (strain ATCC 51573 / DSM 12127 / PCA).